Reading from the N-terminus, the 286-residue chain is MKLIIVSGLSGSGKSVALNALEDAGYYCVDNLHLGLLSAFVRQLMAPRMPLYELAAVGVDVRSGLEELDHFDDIMAEIRAQGVEAQILFLRADEDILLRRFSETRRKHPLARKGMPLVEALRLERSLLARIAVRADLTLDTTRTNVHQLTHLIRDRVEQAGGDALSLLFQSFGFKHGSPVDSDFVFDVRCLPNPYWEPRLRSLTGRDPDVGAYLDEHAVVQEMFDSLRDFLERWIPCFEAEHRSYMTVSLGCTGGQHRSVYLAERLAAHFRQTRGLNVSTRHRELS.

8–15 (GLSGSGKS) is a binding site for ATP. A GTP-binding site is contributed by 60–63 (DVRS).

This sequence belongs to the RapZ-like family.

Its function is as follows. Displays ATPase and GTPase activities. The polypeptide is Nucleotide-binding protein Tgr7_0722 (Thioalkalivibrio sulfidiphilus (strain HL-EbGR7)).